A 184-amino-acid polypeptide reads, in one-letter code: ATP synthase subunit b, chloroplastic (184 aa).

The chain crosses the membrane as a helical span at residues 27-49 (LATNPINLSVVLGVLIFFGKGVL).

This sequence belongs to the ATPase B chain family. F-type ATPases have 2 components, F(1) - the catalytic core - and F(0) - the membrane proton channel. F(1) has five subunits: alpha(3), beta(3), gamma(1), delta(1), epsilon(1). F(0) has four main subunits: a(1), b(1), b'(1) and c(10-14). The alpha and beta chains form an alternating ring which encloses part of the gamma chain. F(1) is attached to F(0) by a central stalk formed by the gamma and epsilon chains, while a peripheral stalk is formed by the delta, b and b' chains.

The protein resides in the plastid. It localises to the chloroplast thylakoid membrane. Functionally, f(1)F(0) ATP synthase produces ATP from ADP in the presence of a proton or sodium gradient. F-type ATPases consist of two structural domains, F(1) containing the extramembraneous catalytic core and F(0) containing the membrane proton channel, linked together by a central stalk and a peripheral stalk. During catalysis, ATP synthesis in the catalytic domain of F(1) is coupled via a rotary mechanism of the central stalk subunits to proton translocation. Component of the F(0) channel, it forms part of the peripheral stalk, linking F(1) to F(0). This Cucumis sativus (Cucumber) protein is ATP synthase subunit b, chloroplastic.